The sequence spans 356 residues: Carbohydrate sulfotransferase 10 (356 aa).

Topologically, residues 1–6 (MHHQWL) are cytoplasmic. A helical; Signal-anchor for type II membrane protein membrane pass occupies residues 7-27 (LLAACFWVIFMFMVASKFITL). Over 28-356 (TFKDPDGYSA…GYQKPDFLLN (329 aa)) the chain is Lumenal. N99 carries N-linked (GlcNAc...) asparagine glycosylation. Residues 127–133 (PKVGNTQ) and 189–197 (RDPFERLIS) each bind 3'-phosphoadenylyl sulfate. N-linked (GlcNAc...) asparagine glycosylation is found at N228 and N316.

This sequence belongs to the sulfotransferase 2 family.

It localises to the golgi apparatus membrane. The enzyme catalyses 3-O-{beta-D-GlcA-(1-&gt;[3)-alpha-D-Xyl-(1-&gt;3)-beta-D-GlcA-(1-&gt;](n)-4)-beta-D-Xyl-(1-&gt;4)-Rib-ol-P-Rib-ol-P-3-beta-D-GalNAc-(1-&gt;3)-beta-D-GlcNAc-(1-&gt;4)-O-6-P-alpha-D-Man}-L-Thr-[protein] + 3'-phosphoadenylyl sulfate = 3-O-{O-3-S-beta-D-GlcA-(1-&gt;[3)-alpha-D-Xyl-(1-&gt;3)-beta-D-GlcA-(1-&gt;](n)-4)-beta-D-Xyl-(1-&gt;4)-Rib-ol-P-Rib-ol-P-3-beta-D-GalNAc-(1-&gt;3)-beta-D-GlcNAc-(1-&gt;4)-O-6-P-alpha-D-Man}-L-Thr-[protein] + adenosine 3',5'-bisphosphate + H(+). It carries out the reaction 17beta-estradiol 3-O-(beta-D-glucuronate) + 3'-phosphoadenylyl sulfate = 17beta-estradiol 3-O-(3-sulfo-beta-D-glucuronate) + adenosine 3',5'-bisphosphate + H(+). The catalysed reaction is 17beta-estradiol 3-O-(beta-D-glucuronate) 17-sulfate + 3'-phosphoadenylyl sulfate = 17beta-estradiol 3-O-(3-sulfo-beta-D-glucuronate) 17-sulfate + adenosine 3',5'-bisphosphate + H(+). It catalyses the reaction 17beta-estradiol 17-O-(beta-D-glucuronate) + 3'-phosphoadenylyl sulfate = 17beta-estradiol 17-O-(3-sulfo-beta-D-glucuronate) + adenosine 3',5'-bisphosphate + H(+). The enzyme catalyses 16alpha,17beta-estriol 3-O-(beta-D-glucuronate) + 3'-phosphoadenylyl sulfate = 16alpha,17beta-estriol 3-O-(3-sulfo-beta-D-glucuronate) + adenosine 3',5'-bisphosphate + H(+). It carries out the reaction 16alpha,17beta-estriol 16-O-(beta-D-glucuronate) + 3'-phosphoadenylyl sulfate = 16alpha,17beta-estriol 16-O-(3-sulfo-beta-D-glucuronate) + adenosine 3',5'-bisphosphate + H(+). The catalysed reaction is 16alpha,17beta-estriol 17-O-(beta-D-glucuronate) + 3'-phosphoadenylyl sulfate = 16alpha,17beta-estriol 17-O-(3-sulfo-beta-D-glucuronate) + adenosine 3',5'-bisphosphate + H(+). It catalyses the reaction estrone 3-O-(beta-D-glucuronate) + 3'-phosphoadenylyl sulfate = estrone 3-O-(3-sulfo-beta-D-glucuronate) + adenosine 3',5'-bisphosphate + H(+). The enzyme catalyses 3alpha,20alpha-dihydroxy-5beta-pregnane 3-O-(beta-D-glucuronate) + 3'-phosphoadenylyl sulfate = 3alpha,20alpha-dihydroxy-5beta-pregnane 3-O-(3-sulfo-beta-D-glucuronate) + adenosine 3',5'-bisphosphate + H(+). It carries out the reaction testosterone 17-O-(beta-D-glucuronate) + 3'-phosphoadenylyl sulfate = testosterone 17-O-(3-sulfo-beta-D-glucuronate) + adenosine 3',5'-bisphosphate + H(+). The catalysed reaction is 3beta-androst-5-en-17-one 3-O-(beta-D-glucuronate) + 3'-phosphoadenylyl sulfate = 3beta-androst-5-en-17-one 3-O-(3-sulfo-beta-D-glucuronate) + adenosine 3',5'-bisphosphate + H(+). It catalyses the reaction 3alpha,17alpha-dihydroxy-5beta-androstane-11-one-17beta-carboxylate 3-O-(beta-D-glucuronate) + 3'-phosphoadenylyl sulfate = 3alpha,17alpha-dihydroxy-5beta-androstane-11-one-17beta-carboxylate 3-O-(3-sulfo-beta-D-glucuronate) + adenosine 3',5'-bisphosphate + H(+). The enzyme catalyses 3alpha-hydroxyetiocholan-17-one 3-O-(beta-D-glucuronate) + 3'-phosphoadenylyl sulfate = 3alpha-hydroxyetiocholan-17-one 3-O-(3-sulfo-beta-D-glucuronate) + adenosine 3',5'-bisphosphate + H(+). The protein operates within steroid metabolism. It functions in the pathway protein modification; carbohydrate sulfation. Catalyzes the transfer of sulfate from 3'-phosphoadenylyl sulfate (PAPS) to position 3 of terminal glucuronic acid of both protein- and lipid-linked oligosaccharides. Participates in biosynthesis of HNK-1 carbohydrate structure 3-O-sulfo-beta-D-GlcA-(1-&gt;3)-beta-D-Gal-(1-&gt;4)-D-GlcNAc-R, a sulfated glucuronyl-lactosaminyl residue carried by many neural recognition molecules, which is involved in cell interactions during ontogenetic development and in synaptic plasticity in the adult. May be indirectly involved in synapse plasticity of the hippocampus, via its role in HNK-1 biosynthesis. Sulfates terminal glucuronyl residue of the laminin globular (LG)-domain binding epitope on DAG1/alpha-dystroglycan and prevents further polymerization by LARGE1 glycosyltransferase. Likely defines the chain length of LG epitope, conferring binding specificity to extracellular matrix components. Plays a role in down-regulating the steroid hormones. Sulfates glucuronidated estrogens and androgens with an impact in hormone cycle and fertility. Has a preference for glucuronyl moiety at the 3-hydroxyl group of a sterol ring rather than the 17-hydroxyl group, showing high catalytic efficiency for 17beta-estradiol 3-O-(beta-D-glucuronate) and dehydroepiandrosterone 3-O-(beta-D-glucuronate) hormones. This chain is Carbohydrate sulfotransferase 10, found in Mus musculus (Mouse).